Here is a 471-residue protein sequence, read N- to C-terminus: Tryptophanase (471 aa).

N6-(pyridoxal phosphate)lysine is present on Lys270.

Belongs to the beta-eliminating lyase family. In terms of assembly, homotetramer. The cofactor is pyridoxal 5'-phosphate.

The catalysed reaction is L-tryptophan + H2O = indole + pyruvate + NH4(+). Its pathway is amino-acid degradation; L-tryptophan degradation via pyruvate pathway; indole and pyruvate from L-tryptophan: step 1/1. The protein is Tryptophanase of Histophilus somni (strain 2336) (Haemophilus somnus).